A 109-amino-acid chain; its full sequence is Movement protein TGB2 (109 aa).

Over 1 to 9 (MPLTPPPDF) the chain is Cytoplasmic. A helical membrane pass occupies residues 10–30 (TKVYLSAALGVSLALVVWLLI). The Lumenal portion of the chain corresponds to 31-72 (RSTLPVVGDRDHNLPHGGWYRDGTKSVFYNSPGRLNSIEARK). Residues 73–93 (APLLGQPWAIVVLLVLLIWAS) form a helical membrane-spanning segment. The Cytoplasmic segment spans residues 94–109 (HKLGRPNCRACAGSHT).

It belongs to the Tymovirales TGBp2 protein family.

It localises to the host endoplasmic reticulum membrane. Its function is as follows. Plays a role in viral cell-to-cell propagation, by facilitating genome transport to neighboring plant cells through plasmosdesmata,. The sequence is that of Movement protein TGB2 from Solanum tuberosum (Potato).